The following is a 565-amino-acid chain: NAD-dependent malic enzyme (565 aa).

The Proton donor role is filled by Tyr104. Position 157 (Arg157) interacts with NAD(+). Lys175 (proton acceptor) is an active-site residue. Residues Glu246, Asp247, and Asp270 each contribute to the a divalent metal cation site. The NAD(+) site is built by Asp270 and Asn418.

The protein belongs to the malic enzymes family. Homotetramer. The cofactor is Mg(2+). Requires Mn(2+) as cofactor.

The enzyme catalyses (S)-malate + NAD(+) = pyruvate + CO2 + NADH. The catalysed reaction is oxaloacetate + H(+) = pyruvate + CO2. This is NAD-dependent malic enzyme from Salmonella arizonae (strain ATCC BAA-731 / CDC346-86 / RSK2980).